Here is a 331-residue protein sequence, read N- to C-terminus: 4-hydroxy-3-methylbut-2-enyl diphosphate reductase (331 aa).

C12 serves as a coordination point for [4Fe-4S] cluster. Residues H43 and H81 each coordinate (2E)-4-hydroxy-3-methylbut-2-enyl diphosphate. Residues H43 and H81 each coordinate dimethylallyl diphosphate. Isopentenyl diphosphate-binding residues include H43 and H81. C103 is a binding site for [4Fe-4S] cluster. (2E)-4-hydroxy-3-methylbut-2-enyl diphosphate is bound at residue H131. Dimethylallyl diphosphate is bound at residue H131. H131 is a binding site for isopentenyl diphosphate. The active-site Proton donor is the E133. T170 serves as a coordination point for (2E)-4-hydroxy-3-methylbut-2-enyl diphosphate. C198 lines the [4Fe-4S] cluster pocket. (2E)-4-hydroxy-3-methylbut-2-enyl diphosphate contacts are provided by S226, N228, and S271. Dimethylallyl diphosphate contacts are provided by S226, N228, and S271. 3 residues coordinate isopentenyl diphosphate: S226, N228, and S271.

Belongs to the IspH family. Requires [4Fe-4S] cluster as cofactor.

The enzyme catalyses isopentenyl diphosphate + 2 oxidized [2Fe-2S]-[ferredoxin] + H2O = (2E)-4-hydroxy-3-methylbut-2-enyl diphosphate + 2 reduced [2Fe-2S]-[ferredoxin] + 2 H(+). It carries out the reaction dimethylallyl diphosphate + 2 oxidized [2Fe-2S]-[ferredoxin] + H2O = (2E)-4-hydroxy-3-methylbut-2-enyl diphosphate + 2 reduced [2Fe-2S]-[ferredoxin] + 2 H(+). The protein operates within isoprenoid biosynthesis; dimethylallyl diphosphate biosynthesis; dimethylallyl diphosphate from (2E)-4-hydroxy-3-methylbutenyl diphosphate: step 1/1. It functions in the pathway isoprenoid biosynthesis; isopentenyl diphosphate biosynthesis via DXP pathway; isopentenyl diphosphate from 1-deoxy-D-xylulose 5-phosphate: step 6/6. Catalyzes the conversion of 1-hydroxy-2-methyl-2-(E)-butenyl 4-diphosphate (HMBPP) into a mixture of isopentenyl diphosphate (IPP) and dimethylallyl diphosphate (DMAPP). Acts in the terminal step of the DOXP/MEP pathway for isoprenoid precursor biosynthesis. The protein is 4-hydroxy-3-methylbut-2-enyl diphosphate reductase of Listeria monocytogenes serotype 4b (strain CLIP80459).